The sequence spans 49 residues: Sperm protamine P1 (49 aa).

The protein belongs to the protamine P1 family. Testis.

The protein resides in the nucleus. Its subcellular location is the chromosome. Protamines substitute for histones in the chromatin of sperm during the haploid phase of spermatogenesis. They compact sperm DNA into a highly condensed, stable and inactive complex. This chain is Sperm protamine P1 (PRM1), found in Rhinopoma hardwickii (Lesser mouse-tailed bat).